Here is a 499-residue protein sequence, read N- to C-terminus: Acetylcholine receptor subunit alpha-type acr-16 (499 aa).

A signal peptide spans 1-19; that stretch reads MSSVCALLLSCALFLVAHG. Residues 20–232 are Extracellular-facing; the sequence is SLQERRLYED…LHMRRRTLYY (213 aa). Residues N43 and N93 are each glycosylated (N-linked (GlcNAc...) asparagine). Cystine bridges form between C147-C161 and C211-C212. 3 helical membrane passes run 233-253, 261-281, and 289-309; these read GFNL…GFTL, ITLQ…VSEM, and VPLL…STVF. Residues 310–473 are Cytoplasmic-facing; it reads TVYVLNLHYR…WKFAAMVVDR (164 aa). A helical transmembrane segment spans residues 474-494; it reads LCLYVFTIFIIASTIGIFWSA. Topologically, residues 495–499 are extracellular; it reads PYLVA.

This sequence belongs to the ligand-gated ion channel (TC 1.A.9) family. Acetylcholine receptor (TC 1.A.9.1) subfamily.

The protein localises to the postsynaptic cell membrane. It localises to the cell membrane. Functionally, after binding acetylcholine, the AChR responds by an extensive change in conformation that affects all subunits and leads to opening of an ion-conducting channel across the plasma membrane. A subunit of the levamisole-insensitive nicotinic receptor. The polypeptide is Acetylcholine receptor subunit alpha-type acr-16 (Caenorhabditis briggsae).